The following is a 232-amino-acid chain: EEF1A lysine methyltransferase 3 (232 aa).

S-adenosyl-L-methionine contacts are provided by residues W57, 83–85 (GAG), D104, W133, and A150.

This sequence belongs to the methyltransferase superfamily. METTL21 family. Interacts with members of the heat shock protein 70 and 90 families and of the TCP-1 chaperonin family, as well as with HSPD1, STIP1 and tubulin; at least some of these proteins may be methylation substrates.

It localises to the cytoplasm. It is found in the cytoskeleton. The protein resides in the microtubule organizing center. The protein localises to the centrosome. It carries out the reaction L-lysyl-[protein] + 3 S-adenosyl-L-methionine = N(6),N(6),N(6)-trimethyl-L-lysyl-[protein] + 3 S-adenosyl-L-homocysteine + 3 H(+). It catalyses the reaction L-lysyl-[protein] + S-adenosyl-L-methionine = N(6)-methyl-L-lysyl-[protein] + S-adenosyl-L-homocysteine + H(+). The catalysed reaction is N(6)-methyl-L-lysyl-[protein] + S-adenosyl-L-methionine = N(6),N(6)-dimethyl-L-lysyl-[protein] + S-adenosyl-L-homocysteine + H(+). The enzyme catalyses N(6),N(6)-dimethyl-L-lysyl-[protein] + S-adenosyl-L-methionine = N(6),N(6),N(6)-trimethyl-L-lysyl-[protein] + S-adenosyl-L-homocysteine + H(+). Functionally, protein-lysine methyltransferase that selectively mono-, di- and trimethylates 'Lys-165' of the translation elongation factors EEF1A1 and EEF1A2 in an aminoacyl-tRNA and GTP-dependent manner. EEF1A1 methylation by EEF1AKMT3 is dynamic as well as inducible by stress conditions, such as ER-stress, and plays a regulatory role on mRNA translation. The sequence is that of EEF1A lysine methyltransferase 3 from Mus musculus (Mouse).